The sequence spans 401 residues: ATP-dependent RNA helicase FAL1 (401 aa).

Residues 27–55 (PTFESMSLKENLLRGIYAYGYESPSAVQS) carry the Q motif motif. The Helicase ATP-binding domain maps to 58–228 (IVQVCKGRDT…TKFMTDPVRI (171 aa)). 71–78 (AQSGTGKT) serves as a coordination point for ATP. A DEAD box motif is present at residues 176 to 179 (DEAD). The Helicase C-terminal domain occupies 239 to 400 (GLKQYFIAVE…EMPMNVADLI (162 aa)).

It belongs to the DEAD box helicase family. DDX48/FAL1 subfamily.

The protein resides in the nucleus. Its subcellular location is the nucleolus. It carries out the reaction ATP + H2O = ADP + phosphate + H(+). Its function is as follows. ATP-dependent RNA helicase involved in 40S ribosomal subunit biogenesis. Required for the processing and cleavage of 35S pre-rRNA at sites A0, A1, and A2, leading to mature 18S rRNA. The chain is ATP-dependent RNA helicase FAL1 (FAL1) from Gibberella zeae (strain ATCC MYA-4620 / CBS 123657 / FGSC 9075 / NRRL 31084 / PH-1) (Wheat head blight fungus).